A 218-amino-acid chain; its full sequence is N-(5'-phosphoribosyl)anthranilate isomerase (218 aa).

It belongs to the TrpF family.

It carries out the reaction N-(5-phospho-beta-D-ribosyl)anthranilate = 1-(2-carboxyphenylamino)-1-deoxy-D-ribulose 5-phosphate. The protein operates within amino-acid biosynthesis; L-tryptophan biosynthesis; L-tryptophan from chorismate: step 3/5. The chain is N-(5'-phosphoribosyl)anthranilate isomerase from Desulfatibacillum aliphaticivorans.